The primary structure comprises 709 residues: Frizzled-6 (709 aa).

A signal peptide spans 1–18 (MERSPFLLACILLPLVRG). The FZ domain occupies 19–132 (HSLFTCEPIT…CNRLPHCDDT (114 aa)). Residues 19-201 (HSLFTCEPIT…SDELDFAKSF (183 aa)) are Extracellular-facing. 5 disulfides stabilise this stretch: C24–C85, C32–C78, C69–C106, C95–C129, and C99–C123. A glycan (N-linked (GlcNAc...) asparagine) is linked at N38. A helical transmembrane segment spans residues 202–222 (IGIVSIFCLCATLFTFLTFLI). At 223–233 (DVRRFRYPERP) the chain is on the cytoplasmic side. A helical membrane pass occupies residues 234 to 254 (IIYYSVCYSIVSLMYFVGFLL). Over 255–284 (GNSTACNKADEKLELGDTVVLGSKNKACSV) the chain is Extracellular. N256 carries an N-linked (GlcNAc...) asparagine glycan. A helical transmembrane segment spans residues 285-305 (VFMFLYFFTMAGTVWWVILTI). The Cytoplasmic portion of the chain corresponds to 306–324 (TWFLAAGRKWSCEAIEQKA). Residues 325–345 (VWFHAVAWGAPGFLTVMLLAM) form a helical membrane-spanning segment. At 346 to 370 (NKVEGDNISGVCFVGLYDLDASRYF) the chain is on the extracellular side. Residue N352 is glycosylated (N-linked (GlcNAc...) asparagine). The chain crosses the membrane as a helical span at residues 371-391 (VLLPLCLCVFVGLSLLLAGII). Residues 392 to 416 (SLNHVRQVIQHDGRNQEKLKKFMIR) lie on the Cytoplasmic side of the membrane. The chain crosses the membrane as a helical span at residues 417 to 437 (IGVFSGLYLVPLVTLLGCYVY). Residues 438-473 (ELVNRITWEMTWFSDHCHQYRIPCPYQANPKARPEL) lie on the Extracellular side of the membrane. A helical transmembrane segment spans residues 474-494 (ALFMIKYLMTLIVGISAVFWV). Topologically, residues 495-709 (GSKKTCTEWA…EQGAGSHSDA (215 aa)) are cytoplasmic. The Lys-Thr-X-X-X-Trp motif, mediates interaction with the PDZ domain of Dvl family members signature appears at 498–503 (KTCTEW). Polar residues predominate over residues 583 to 594 (QETSTEVHTSPE). The interval 583 to 709 (QETSTEVHTS…EQGAGSHSDA (127 aa)) is disordered. Positions 596–616 (SVKEGRADRANTPSAKDRDCG) are enriched in basic and acidic residues. The span at 620–629 (GPSSKLSGNR) shows a compositional bias: polar residues. Basic and acidic residues predominate over residues 630–644 (NGRESRAGGLKERSN). S656 bears the Phosphoserine mark. Residues 669–690 (CSTSQAASSPEPTSLKGSTSLP) show a composition bias toward polar residues. Residues 697–709 (ARKEQGAGSHSDA) are compositionally biased toward basic and acidic residues.

Belongs to the G-protein coupled receptor Fz/Smo family. As to quaternary structure, interacts with LMBR1L. In terms of processing, ubiquitinated by ZNRF3, leading to its degradation by the proteasome. As to expression, expressed in both hair cells and supporting cells in the utricle, saccule, cristae and the organ of Corti in the inner ear (at protein level).

It localises to the membrane. It is found in the cell membrane. The protein resides in the cell surface. Its subcellular location is the apical cell membrane. The protein localises to the cytoplasmic vesicle membrane. It localises to the endoplasmic reticulum membrane. Its function is as follows. Receptor for Wnt proteins. Most of frizzled receptors are coupled to the beta-catenin canonical signaling pathway, which leads to the activation of disheveled proteins, inhibition of GSK-3 kinase, nuclear accumulation of beta-catenin and activation of Wnt target genes. A second signaling pathway involving PKC and calcium fluxes has been seen for some family members, but it is not yet clear if it represents a distinct pathway or if it can be integrated in the canonical pathway, as PKC seems to be required for Wnt-mediated inactivation of GSK-3 kinase. Both pathways seem to involve interactions with G-proteins. Activation by Wnt5A stimulates PKC activity via a G-protein-dependent mechanism. Involved in transduction and intercellular transmission of polarity information during tissue morphogenesis and/or in differentiated tissues. Together with FZD3, is involved in the neural tube closure and plays a role in the regulation of the establishment of planar cell polarity (PCP), particularly in the orientation of asymmetric bundles of stereocilia on the apical faces of a subset of auditory and vestibular sensory cells located in the inner ear. The polypeptide is Frizzled-6 (Fzd6) (Mus musculus (Mouse)).